Consider the following 687-residue polypeptide: MGNGERPPARRPDSSGSPPPAADAPAASNHPFSSHDTKHMTSRRLASRTAVAASLSALMLAACGGDDSANAPTAGGAAPLTPAVASPAGPTGSTPGSTPGATTAPAPSSTSAGQLSVDKMAFAQTHVVPSGGLSWTLPNASASLRPISRRDALVLVAIGQADAVQPVLEAWKDGAKLGALALSPPSALPPTESGGRAYANDRWSAVVPAAWMVPGVSFSVSASNYTSSVAQAPVFGTDADVQLTILPFYLFGADDTNSPPLSTTQAPDAATQQEIFAKWPTAELKVRTHPAGRFSLATVVVGPRADRTGAAQPAYPVTALDQQKDGYGVMSAMLTLITNMRTANGDGPLNDQYYAPLIALNSNGQFANLGGGLGGVGSGAAVGDHRYTGIFIHEQGHAFGLNHAGDEYAKGAYPYAGGSLSGSVWGYDPNHREFLDVLVPTTASSYAKCASSHQLDAQGRCYKQDPMQGGAGDQSSGYKFATFSDYNTGRMQAWIASRVLADPASSTGYSKWDSAAQARAPYTPTTDNNGLYGVNQNLPVQAGVPVHTIVVSFSKAGSAGASYIYPPFSYTGNLIATFDPTSAADRQAITVDKGTYPWYCKGTGCDYTLRVTYADGSRTYRVLQGGFRAWWTPTVYDANATNPLSGSSFRVWAINVPGDKRIGKIELLDTPMVWNGMPANPTVLLSR.

Disordered regions lie at residues 1-45 and 73-112; these read MGNG…SRRL and TAGG…STSA. In terms of domain architecture, Peptidase M66 spans 233–501; the sequence is PVFGTDADVQ…QAWIASRVLA (269 aa). Residue histidine 393 coordinates Zn(2+). Residue glutamate 394 is part of the active site. Zn(2+) contacts are provided by histidine 397 and histidine 403.

The protein belongs to the dictomallein family. Zn(2+) is required as a cofactor.

The chain is Dictomallein (dtmL) from Burkholderia mallei (strain NCTC 10247).